The following is a 237-amino-acid chain: MRPSNRTPAQTRPITITRQFTAHAEGSVLVEFGETKVLCTASFTEGVPRFLKGQGQGWVTAEYGMLPRSTHSRMDREAARGKQSGRTQEIQRLIGRALRACVDMKALGENTIVIDCDVIQADGGTRTASITGACVALVDALNWARGKGIIKSNPLKFLIAAVSVGIYNGEAISDLEYVEDSAAETDMNVVMTETGKIIEIQGTAEGEPFSHEELIELLGLAKNSIREIVDVQKAALN.

Phosphate-binding positions include arginine 86 and 124–126; that span reads GTR.

Belongs to the RNase PH family. Homohexameric ring arranged as a trimer of dimers.

It carries out the reaction tRNA(n+1) + phosphate = tRNA(n) + a ribonucleoside 5'-diphosphate. In terms of biological role, phosphorolytic 3'-5' exoribonuclease that plays an important role in tRNA 3'-end maturation. Removes nucleotide residues following the 3'-CCA terminus of tRNAs; can also add nucleotides to the ends of RNA molecules by using nucleoside diphosphates as substrates, but this may not be physiologically important. Probably plays a role in initiation of 16S rRNA degradation (leading to ribosome degradation) during starvation. This Shewanella sp. (strain ANA-3) protein is Ribonuclease PH.